Here is a 549-residue protein sequence, read N- to C-terminus: DDB1- and CUL4-associated factor 11 (549 aa).

Over residues 1–24 (MGSRNSSSAGSGSLEPSEGLSRRG) the composition is skewed to low complexity. Residues 1–40 (MGSRNSSSAGSGSLEPSEGLSRRGTGLRRSEEEEEEDEDV) are disordered. A phosphoserine mark is found at S73 and S75. WD repeat units lie at residues 170 to 210 (TYSQ…HKFK), 216 to 258 (DVGW…TALD), 263 to 302 (ERRF…RTLQ), 305 to 345 (SHED…EDDP), 353 to 392 (GHQD…SREG), 435 to 480 (GVLH…KKLT), and 481 to 520 (NHKA…YFQD).

As to quaternary structure, interacts with DDB1 and CUL4A.

The protein operates within protein modification; protein ubiquitination. In terms of biological role, may function as a substrate receptor for CUL4-DDB1 E3 ubiquitin-protein ligase complex. The protein is DDB1- and CUL4-associated factor 11 (Dcaf11) of Mus musculus (Mouse).